Reading from the N-terminus, the 480-residue chain is G-rich sequence factor 1 (480 aa).

Residues 1-117 (MAGTRWVLGA…AAAAVPTRSY (117 aa)) constitute a mitochondrion transit peptide. RRM domains lie at 122 to 246 (KTTY…SSPV) and 250 to 326 (GVVR…PSRR). S244 is modified (phosphoserine). S335 carries the phosphoserine modification. Positions 401 to 480 (HFVHMRGLPF…LFLNSCPKGK (80 aa)) constitute an RRM 3 domain.

As to quaternary structure, monomer. Found in a complex with DDX28, DHX30, FASTKD2 and FASTKD5. Interacts with the mitochondrial RNase P complex subunit TRMT10C/MRPP1. Interacts with the 2 components of the mitochondrial degradosome complex, PNPT1 and SUPV3L1, in an RNA-dependent manner.

Its subcellular location is the mitochondrion matrix. The protein localises to the cytoplasm. Functionally, regulator of post-transcriptional mitochondrial gene expression, required for assembly of the mitochondrial ribosome and for recruitment of mRNA and lncRNA. Binds RNAs containing the 14 base G-rich element. Preferentially binds RNAs transcribed from three contiguous genes on the light strand of mtDNA, the ND6 mRNA, and the long non-coding RNAs for MT-CYB and MT-ND5, each of which contains multiple consensus binding sequences. Involved in the degradosome-mediated decay of non-coding mitochondrial transcripts (MT-ncRNA) and tRNA-like molecules. Acts by unwinding G-quadruplex RNA structures in MT-ncRNA, thus facilitating their degradation by the degradosome. G-quadruplexes (G4) are non-canonical 4 stranded structures formed by transcripts from the light strand of mtDNA. This is G-rich sequence factor 1 (GRSF1) from Homo sapiens (Human).